We begin with the raw amino-acid sequence, 662 residues long: MTIPKSSTGQSYPPVLDYRIVQLIGGGGFSKVFRAVNPSSESHSVAAIKVISYAPNRSNKYPIDRRALQKEVQVHSILKHPNVLEFLGAVERGVDKNGNAGKEKGILMGEAVATTKESIRARDKERQQMLSSPSHDQNYVPGLYMVLELGAGGDLFDKIAPDYGVEEDLAHFYFQQLLAGLEYIHSQGVTHRDIKPENMLLDAEGNLKIADFGLCSVYKYKGKERELTGACGSLPYIAPEMNGKPYRGEPVDVWSSGVVLFAMLVGSTPWDEPTSRSPEYSAYRTGKLFEYDPWPRIPQDALSLLKKMMHPTPEKRITFEGIRRHRWFKRANDLMTQKGKCNDPVNLAEKLLQGLAVSGDIIVEVNGAAAAAARRLDLHSDGQRAQVPENVSLTQPDAILTSSFDLAARAVARGWADDTGPGGGLPLPSSTAMPAFASDDMSRRLAMSQHISSRRAEFSTTASGSGYDMALPGASQFTQALNHFTQFEALTHVAGTGSSHLRFSPHLTRFFSSASAATILALIIDVLDRLAVLNAHQAIGDQEELELEEAYNFMADGEPETTVPSDDSSRPTGGSKRLLIGSRGARIRLKTMDRRKCVLRGEVYVENLAAPDSTSDSASAPDRNAAKCLVVMKKGKGDPLEWRRLFREVCRRPEIMQTIIST.

A Protein kinase domain is found at 18–328 (YRIVQLIGGG…FEGIRRHRWF (311 aa)). ATP is bound by residues 24–32 (IGGGGFSKV) and Lys49. The Proton acceptor role is filled by Asp193. Residues 557–577 (GEPETTVPSDDSSRPTGGSKR) form a disordered region. Residues 562 to 572 (TVPSDDSSRPT) are compositionally biased toward polar residues.

The protein belongs to the protein kinase superfamily. CAMK Ser/Thr protein kinase family. NIM1 subfamily. In terms of processing, phosphorylated.

It is found in the nucleus. The enzyme catalyses L-seryl-[protein] + ATP = O-phospho-L-seryl-[protein] + ADP + H(+). It catalyses the reaction L-threonyl-[protein] + ATP = O-phospho-L-threonyl-[protein] + ADP + H(+). Functionally, serine/threonine-protein kinase which is required for checkpoint-mediated cell cycle arrest and activation of DNA repair in response to the presence of DNA damage or unreplicated DNA. May also negatively regulate cell cycle progression during unperturbed cell cycles. This chain is Serine/threonine-protein kinase CHK1 (CHK1), found in Mycosarcoma maydis (Corn smut fungus).